The chain runs to 268 residues: Octanoyltransferase (268 aa).

One can recognise a BPL/LPL catalytic domain in the interval 49–237; sequence GTQGDVILVV…ALLKALSGEL (189 aa). Residues 87-94, 167-169, and 180-182 each bind substrate; these read RGGRITWH, ALG, and GLA. The Acyl-thioester intermediate role is filled by C198.

This sequence belongs to the LipB family.

It is found in the cytoplasm. The catalysed reaction is octanoyl-[ACP] + L-lysyl-[protein] = N(6)-octanoyl-L-lysyl-[protein] + holo-[ACP] + H(+). It participates in protein modification; protein lipoylation via endogenous pathway; protein N(6)-(lipoyl)lysine from octanoyl-[acyl-carrier-protein]: step 1/2. In terms of biological role, catalyzes the transfer of endogenously produced octanoic acid from octanoyl-acyl-carrier-protein onto the lipoyl domains of lipoate-dependent enzymes. Lipoyl-ACP can also act as a substrate although octanoyl-ACP is likely to be the physiological substrate. This is Octanoyltransferase from Corynebacterium aurimucosum (strain ATCC 700975 / DSM 44827 / CIP 107346 / CN-1) (Corynebacterium nigricans).